The sequence spans 317 residues: Nitrilase (317 aa).

Residues 5–280 (VKVAVVQAEP…DGVIISELDM (276 aa)) form the CN hydrolase domain. Catalysis depends on glutamate 45, which acts as the Proton acceptor. The active site involves lysine 125. Residue cysteine 165 is the Nucleophile of the active site.

It belongs to the carbon-nitrogen hydrolase superfamily. Nitrilase family.

It carries out the reaction a nitrile + 2 H2O = a carboxylate + NH4(+). Its function is as follows. Nitrilase that hydrolyzes preferentially 4-cyanopyridine. Is also able to hydrolyze some aliphatic nitriles, such as phenylacetonitrile. The protein is Nitrilase of Meyerozyma guilliermondii (strain ATCC 6260 / CBS 566 / DSM 6381 / JCM 1539 / NBRC 10279 / NRRL Y-324) (Yeast).